The chain runs to 405 residues: Enoyl-[acyl-carrier-protein] reductase [NADH] (405 aa).

Residues Gly48–Tyr53, Phe74–Glu75, Asp111–Ala112, and Leu140–Ala141 contribute to the NAD(+) site. Tyr226 contacts substrate. Tyr236 acts as the Proton donor in catalysis. NAD(+) is bound by residues Lys245 and Val274 to Thr276.

It belongs to the TER reductase family. As to quaternary structure, monomer.

It catalyses the reaction a 2,3-saturated acyl-[ACP] + NAD(+) = a (2E)-enoyl-[ACP] + NADH + H(+). Its pathway is lipid metabolism; fatty acid biosynthesis. Its function is as follows. Involved in the final reduction of the elongation cycle of fatty acid synthesis (FAS II). Catalyzes the reduction of a carbon-carbon double bond in an enoyl moiety that is covalently linked to an acyl carrier protein (ACP). This is Enoyl-[acyl-carrier-protein] reductase [NADH] from Xanthomonas oryzae pv. oryzae (strain PXO99A).